A 785-amino-acid polypeptide reads, in one-letter code: uncharacterized protein (785 aa).

Positions 1–93 constitute a PE domain; that stretch reads MSWVMVSPEL…GGAYAAAEAA (93 aa).

Belongs to the mycobacterial PE family. PGRS subfamily.

This is an uncharacterized protein from Mycobacterium tuberculosis (strain CDC 1551 / Oshkosh).